Consider the following 24-residue polypeptide: Xenoposin-precursor fragment B1 (24 aa).

Expressed by the skin glands.

Its subcellular location is the secreted. In terms of biological role, has antibacterial activity. This is Xenoposin-precursor fragment B1 from Xenopus borealis (Kenyan clawed frog).